A 463-amino-acid chain; its full sequence is Metalloprotease slr0863 (463 aa).

The protein belongs to the peptidase U62 family.

Probable metalloprotease. This Synechocystis sp. (strain ATCC 27184 / PCC 6803 / Kazusa) protein is Metalloprotease slr0863.